The sequence spans 339 residues: Fe-S cluster assembly protein DRE2 (339 aa).

The segment at 1–157 is N-terminal SAM-like domain; it reads MTRILLLLHP…KKLSSTHAAV (157 aa). Residues 158–206 form a linker region; sequence GLTDTSASNTDEENDDVNSKRKLQETKLAYFSESDDEDEEDQIIDENNL. [2Fe-2S] cluster is bound by residues Cys221, Cys233, Cys236, and Cys238. Positions 221-238 are fe-S binding site A; sequence CELPNGKKRRKACKDCTC. Residues Cys302, Cys305, Cys313, and Cys316 each contribute to the [4Fe-4S] cluster site. Short sequence motifs (cx2C motif) lie at residues 302-305 and 313-316; these read CSSC and CDGC. The tract at residues 302 to 316 is fe-S binding site B; sequence CSSCSLGDAFRCDGC.

Belongs to the anamorsin family. In terms of assembly, monomer. Interacts with TAH18. Interacts with MIA40. Requires [2Fe-2S] cluster as cofactor. It depends on [4Fe-4S] cluster as a cofactor.

The protein resides in the cytoplasm. Its subcellular location is the mitochondrion intermembrane space. Component of the cytosolic iron-sulfur (Fe-S) protein assembly (CIA) machinery required for the maturation of extramitochondrial Fe-S proteins. Part of an electron transfer chain functioning in an early step of cytosolic Fe-S biogenesis, facilitating the de novo assembly of a [4Fe-4S] cluster on the scaffold complex CFD1-NBP35. Electrons are transferred to DRE2 from NADPH via the FAD- and FMN-containing protein TAH18. TAH18-DRE2 are also required for the assembly of the diferric tyrosyl radical cofactor of ribonucleotide reductase (RNR), probably by providing electrons for reduction during radical cofactor maturation in the catalytic small subunit RNR2. The sequence is that of Fe-S cluster assembly protein DRE2 from Debaryomyces hansenii (strain ATCC 36239 / CBS 767 / BCRC 21394 / JCM 1990 / NBRC 0083 / IGC 2968) (Yeast).